A 261-amino-acid polypeptide reads, in one-letter code: Matrix metalloproteinase-26 (261 aa).

Positions 1–17 are cleaved as a signal peptide; the sequence is MQLVILRVTIFLPWCFA. The propeptide occupies 18 to 89; sequence VPVPPAADHK…PHCGVPDGSD (72 aa). Asn64 carries N-linked (GlcNAc...) asparagine glycosylation. Residues 80 to 87 carry the Cysteine switch motif; sequence PHCGVPDG. 2 residues coordinate Zn(2+): Cys82 and His208. Glu209 is a catalytic residue. Zn(2+) contacts are provided by His212 and His218. An N-linked (GlcNAc...) asparagine glycan is attached at Asn221.

It belongs to the peptidase M10A family. Zn(2+) is required as a cofactor. Ca(2+) serves as cofactor. As to expression, expressed specifically in uterus and placenta. Is also widely expressed in malignant tumors from different sources as well as in diverse tumor cell lines.

It is found in the secreted. It localises to the extracellular space. The protein localises to the extracellular matrix. May hydrolyze collagen type IV, fibronectin, fibrinogen, beta-casein, type I gelatin and alpha-1 proteinase inhibitor. Is also able to activate progelatinase B. The protein is Matrix metalloproteinase-26 (MMP26) of Homo sapiens (Human).